The primary structure comprises 426 residues: D-tagatose-1,6-bisphosphate aldolase subunit KbaZ (426 aa).

Belongs to the GatZ/KbaZ family. KbaZ subfamily. In terms of assembly, forms a complex with KbaY.

Its pathway is carbohydrate metabolism; D-tagatose 6-phosphate degradation; D-glyceraldehyde 3-phosphate and glycerone phosphate from D-tagatose 6-phosphate: step 2/2. Component of the tagatose-1,6-bisphosphate aldolase KbaYZ that is required for full activity and stability of the Y subunit. Could have a chaperone-like function for the proper and stable folding of KbaY. When expressed alone, KbaZ does not show any aldolase activity. In Escherichia fergusonii (strain ATCC 35469 / DSM 13698 / CCUG 18766 / IAM 14443 / JCM 21226 / LMG 7866 / NBRC 102419 / NCTC 12128 / CDC 0568-73), this protein is D-tagatose-1,6-bisphosphate aldolase subunit KbaZ.